A 1318-amino-acid polypeptide reads, in one-letter code: Major tegument protein (1318 aa).

Belongs to the herpesviridae MTP family. Interacts with host DAXX; this interaction disrupts the chromatin remodeling complex ATRX:DAXX and thus allows viral transcription. Interacts with host SMC6; this interaction targets SMC5-SMC6 complex for proteasomal degradation.

It is found in the virion tegument. The protein localises to the host nucleus. Tegument protein that plays a role in the inhibition of host intrinsic defenses to promote viral early gene activation. Interacts with host DAXX and thereby disrupts the complex between DAXX and ATRX. Suppresses the DAXX-ATRX dependent deposition of histone H3.3 on viral chromatin allowing viral transcription. Targets also host SMC5/6 for proteasomal degradation in a CUL7 and calpain-dependent manner to support nuclear membrane-less replication compartment formation and lytic virus replication. The protein is Major tegument protein of Epstein-Barr virus (strain GD1) (HHV-4).